A 99-amino-acid polypeptide reads, in one-letter code: uncharacterized protein (99 aa).

Disordered stretches follow at residues 1–24 and 49–99; these read MKATRRTRVASERGVRRRRRVRAT and SVRT…RCAT. Composition is skewed to basic residues over residues 15-24 and 71-81; these read VRRRRRVRAT and SRRRGRPRSSR.

This is an uncharacterized protein from Streptomyces fradiae (Streptomyces roseoflavus).